A 311-amino-acid polypeptide reads, in one-letter code: Methionyl-tRNA formyltransferase (311 aa).

Position 110-113 (S110–P113) interacts with (6S)-5,6,7,8-tetrahydrofolate.

This sequence belongs to the Fmt family.

It catalyses the reaction L-methionyl-tRNA(fMet) + (6R)-10-formyltetrahydrofolate = N-formyl-L-methionyl-tRNA(fMet) + (6S)-5,6,7,8-tetrahydrofolate + H(+). In terms of biological role, attaches a formyl group to the free amino group of methionyl-tRNA(fMet). The formyl group appears to play a dual role in the initiator identity of N-formylmethionyl-tRNA by promoting its recognition by IF2 and preventing the misappropriation of this tRNA by the elongation apparatus. In Streptococcus pyogenes serotype M6 (strain ATCC BAA-946 / MGAS10394), this protein is Methionyl-tRNA formyltransferase.